The chain runs to 217 residues: Probable GTP-binding protein EngB (217 aa).

An EngB-type G domain is found at 33 to 217 (GPAEIAFAGR…RITIEQAVAR (185 aa)). GTP is bound by residues 41–48 (GRSNVGKS), 68–72 (GRTQE), 95–98 (DMPG), 162–165 (TKTD), and 196–198 (TSS). Residues Ser48 and Thr70 each contribute to the Mg(2+) site.

The protein belongs to the TRAFAC class TrmE-Era-EngA-EngB-Septin-like GTPase superfamily. EngB GTPase family. Mg(2+) serves as cofactor.

Necessary for normal cell division and for the maintenance of normal septation. The sequence is that of Probable GTP-binding protein EngB from Sinorhizobium fredii (strain NBRC 101917 / NGR234).